The chain runs to 109 residues: Large ribosomal subunit protein uL24 (109 aa).

The protein belongs to the universal ribosomal protein uL24 family. In terms of assembly, part of the 50S ribosomal subunit.

Functionally, one of two assembly initiator proteins, it binds directly to the 5'-end of the 23S rRNA, where it nucleates assembly of the 50S subunit. Its function is as follows. One of the proteins that surrounds the polypeptide exit tunnel on the outside of the subunit. This is Large ribosomal subunit protein uL24 from Rickettsia africae (strain ESF-5).